The sequence spans 385 residues: Guanine nucleotide-binding protein alpha-5 subunit (385 aa).

A lipid anchor (N-myristoyl glycine) is attached at glycine 2. The S-palmitoyl cysteine moiety is linked to residue cysteine 6. The 354-residue stretch at 32-385 (RKIKMLLLGI…NKNIETLSLE (354 aa)) folds into the G-alpha domain. Positions 35–48 (KMLLLGISDSGKST) are G1 motif. GTP-binding positions include 40-47 (GISDSGKS), 174-180 (IHMRQTT), 199-203 (DVGGQ), 298-301 (NKID), and alanine 357. Mg(2+)-binding residues include serine 47 and threonine 180. The tract at residues 172-180 (DLIHMRQTT) is G2 motif. The tract at residues 195 to 204 (IRLIDVGGQK) is G3 motif. The interval 294 to 301 (MLFLNKID) is G4 motif. Positions 355–360 (TQATIT) are G5 motif.

It belongs to the G-alpha family. In terms of assembly, g proteins are composed of 3 units; alpha, beta and gamma. The alpha chain contains the guanine nucleotide binding site.

In terms of biological role, guanine nucleotide-binding proteins (G proteins) are involved as modulators or transducers in various transmembrane signaling systems. The chain is Guanine nucleotide-binding protein alpha-5 subunit (gpa-5) from Caenorhabditis briggsae.